The chain runs to 348 residues: UDP-glucose 4-epimerase (348 aa).

NAD(+)-binding positions include 12–14, 33–37, 66–67, phenylalanine 88, and lysine 92; these read GYI, DNFHN, and DI. Position 132 to 134 (132 to 134) interacts with substrate; it reads SAT. Tyrosine 157 acts as the Proton acceptor in catalysis. The NAD(+) site is built by lysine 161 and tyrosine 185. Residues 185–187, 206–208, 224–226, arginine 239, and 300–303 each bind substrate; these read YFN, NNL, NVF, and REGD.

Belongs to the NAD(P)-dependent epimerase/dehydratase family. Homodimer. The cofactor is NAD(+).

The enzyme catalyses UDP-alpha-D-glucose = UDP-alpha-D-galactose. It carries out the reaction UDP-N-acetyl-alpha-D-glucosamine = UDP-N-acetyl-alpha-D-galactosamine. The protein operates within carbohydrate metabolism; galactose metabolism. Its function is as follows. Catalyzes two distinct but analogous reactions: the reversible epimerization of UDP-glucose to UDP-galactose and the reversible epimerization of UDP-N-acetylglucosamine to UDP-N-acetylgalactosamine. The reaction with UDP-Gal plays a critical role in the Leloir pathway of galactose catabolism in which galactose is converted to the glycolytic intermediate glucose 6-phosphate. It contributes to the catabolism of dietary galactose and enables the endogenous biosynthesis of both UDP-Gal and UDP-GalNAc when exogenous sources are limited. Both UDP-sugar interconversions are important in the synthesis of glycoproteins and glycolipids. This is UDP-glucose 4-epimerase from Homo sapiens (Human).